We begin with the raw amino-acid sequence, 426 residues long: D-tagatose-1,6-bisphosphate aldolase subunit KbaZ (426 aa).

It belongs to the GatZ/KbaZ family. KbaZ subfamily. In terms of assembly, forms a complex with KbaY.

It functions in the pathway carbohydrate metabolism; D-tagatose 6-phosphate degradation; D-glyceraldehyde 3-phosphate and glycerone phosphate from D-tagatose 6-phosphate: step 2/2. Its function is as follows. Component of the tagatose-1,6-bisphosphate aldolase KbaYZ that is required for full activity and stability of the Y subunit. Could have a chaperone-like function for the proper and stable folding of KbaY. When expressed alone, KbaZ does not show any aldolase activity. This Escherichia coli O6:K15:H31 (strain 536 / UPEC) protein is D-tagatose-1,6-bisphosphate aldolase subunit KbaZ.